We begin with the raw amino-acid sequence, 488 residues long: Inositol 1,3,4-trisphosphate 5/6-kinase 4 (488 aa).

Positions 208 and 224 each coordinate 1D-myo-inositol 1,3,4-trisphosphate. An ATP-grasp domain is found at 246–488 (NACAIVDPIR…RFDQHVQEKH (243 aa)). Positions 263 and 315 each coordinate ATP. 1D-myo-inositol 1,3,4-trisphosphate is bound by residues H326 and K360. ATP is bound by residues 349 to 360 (QEYVDHSSRIFK), S375, and S398. Residues D439, D453, and N455 each contribute to the Mg(2+) site. Residues N455 and S459 each coordinate 1D-myo-inositol 1,3,4-trisphosphate.

It belongs to the ITPK1 family. In terms of assembly, monomer. The cofactor is Mg(2+). In terms of tissue distribution, expressed in roots, leaf vasculature, cauline leaves, flower buds and siliques.

The catalysed reaction is 1D-myo-inositol 1,3,4-trisphosphate + ATP = 1D-myo-inositol 1,3,4,5-tetrakisphosphate + ADP + H(+). It catalyses the reaction 1D-myo-inositol 1,3,4-trisphosphate + ATP = 1D-myo-inositol 1,3,4,6-tetrakisphosphate + ADP + H(+). Kinase that can phosphorylate the inositol polyphosphate Ins(1,3,4)P3 to form InsP4. Also phosphorylates a racemic mixture of Ins(1,4,6)P3 and Ins(3,4,6)P3 to form InsP4. Does not display inositol 3,4,5,6-tetrakisphosphate 1-kinase activity, but possesses inositol 1,4,5,6-tetrakisphosphate and inositol 1,3,4,5-tetrakisphosphate isomerase activity. Ins(1,3,4,6)P4 is an essential molecule in the hexakisphosphate (InsP6) pathway. This chain is Inositol 1,3,4-trisphosphate 5/6-kinase 4 (ITPK4), found in Arabidopsis thaliana (Mouse-ear cress).